The sequence spans 418 residues: Glutamyl-tRNA reductase (418 aa).

Substrate is bound by residues 49–52 (TCNR), Ser-109, 114–116 (EPQ), and Gln-120. Catalysis depends on Cys-50, which acts as the Nucleophile. Residue 189–194 (GAGETI) participates in NADP(+) binding.

Belongs to the glutamyl-tRNA reductase family. In terms of assembly, homodimer.

It carries out the reaction (S)-4-amino-5-oxopentanoate + tRNA(Glu) + NADP(+) = L-glutamyl-tRNA(Glu) + NADPH + H(+). Its pathway is porphyrin-containing compound metabolism; protoporphyrin-IX biosynthesis; 5-aminolevulinate from L-glutamyl-tRNA(Glu): step 1/2. Catalyzes the NADPH-dependent reduction of glutamyl-tRNA(Glu) to glutamate 1-semialdehyde (GSA). The protein is Glutamyl-tRNA reductase of Escherichia coli O139:H28 (strain E24377A / ETEC).